Here is a 234-residue protein sequence, read N- to C-terminus: Transcription factor bHLH160 (234 aa).

The segment covering 1–13 (MSSQPNHQTSISS) has biased composition (polar residues). A disordered region spans residues 1-67 (MSSQPNHQTS…GAAKKQDHNA (67 aa)). The segment covering 27-37 (IVEKESAEKDT) has biased composition (basic and acidic residues). One can recognise a bHLH domain in the interval 60-115 (AKKQDHNAKERLRRMRLHASYLTLGTLLPDHSSSSSKKKWSAPSIIDNVITYIPKL).

It belongs to the bHLH protein family.

The protein resides in the nucleus. The chain is Transcription factor bHLH160 from Arabidopsis thaliana (Mouse-ear cress).